The sequence spans 345 residues: Phosphoribosylformylglycinamidine cyclo-ligase (345 aa).

Belongs to the AIR synthase family.

The protein resides in the cytoplasm. It catalyses the reaction 2-formamido-N(1)-(5-O-phospho-beta-D-ribosyl)acetamidine + ATP = 5-amino-1-(5-phospho-beta-D-ribosyl)imidazole + ADP + phosphate + H(+). Its pathway is purine metabolism; IMP biosynthesis via de novo pathway; 5-amino-1-(5-phospho-D-ribosyl)imidazole from N(2)-formyl-N(1)-(5-phospho-D-ribosyl)glycinamide: step 2/2. This is Phosphoribosylformylglycinamidine cyclo-ligase from Salmonella choleraesuis (strain SC-B67).